A 225-amino-acid polypeptide reads, in one-letter code: Transcription factor HES-7 (225 aa).

The region spanning 12–69 is the bHLH domain; sequence GPKMLKPLVEKRRRDRINRSLEELRLLLLERTRDQNLRNPKLEKAEILEFAVGYLRER. Residues 92–122 form the Orange domain; it reads YLSGFRECLLRLAAFAHDASPAARSQLFSAL. The interval 124–225 is disordered; sequence GYRRPKPPRP…PPPAFWRPWP (102 aa). Pro residues-rich tracts occupy residues 140-149 and 213-225; these read LPAPRPPLDP and PSLP…RPWP. A WRPW motif motif is present at residues 221 to 224; it reads WRPW.

Transcription repression requires formation of a complex with a corepressor protein of the Groucho/TLE family.

The protein resides in the nucleus. Its function is as follows. Transcriptional repressor. Represses transcription from both N box- and E box-containing promoters. May with HES1, cooperatively regulate somite formation in the presomitic mesoderm (PSM). May function as a segmentation clock, which is essential for coordinated somite segmentation. In Mus musculus (Mouse), this protein is Transcription factor HES-7 (Hes7).